Reading from the N-terminus, the 369-residue chain is Putative esterase slr0264 (369 aa).

Catalysis depends on charge relay system residues Ser162, Asp303, and His334.

It belongs to the AB hydrolase superfamily. AB hydrolase 4 family.

This is Putative esterase slr0264 from Synechocystis sp. (strain ATCC 27184 / PCC 6803 / Kazusa).